The following is an 862-amino-acid chain: Eukaryotic translation initiation factor 3 subunit C (862 aa).

Residues 1–10 (MSRFFYGGGS) are compositionally biased toward gly residues. The tract at residues 1 to 81 (MSRFFYGGGS…DEEKTTVVKS (81 aa)) is disordered. Residues 16–52 (SSDEEELYERDEEEQSEEEESSEEEETSEEGSDDEEG) are compositionally biased toward acidic residues. Positions 601–775 (FHMHINLELL…GAIVFRKGVE (175 aa)) constitute a PCI domain. The disordered stretch occupies residues 814-862 (RDQGAGARGGRGGGRGGHARGGARFPGQQGRRPGGQQFGGGALGGAIKA). The span at 819 to 833 (GARGGRGGGRGGHAR) shows a compositional bias: gly residues. Over residues 835–844 (GARFPGQQGR) the composition is skewed to low complexity. A compositionally biased stretch (gly residues) spans 845–862 (RPGGQQFGGGALGGAIKA).

This sequence belongs to the eIF-3 subunit C family. In terms of assembly, component of the eukaryotic translation initiation factor 3 (eIF-3) complex.

It localises to the cytoplasm. In terms of biological role, component of the eukaryotic translation initiation factor 3 (eIF-3) complex, which is involved in protein synthesis of a specialized repertoire of mRNAs and, together with other initiation factors, stimulates binding of mRNA and methionyl-tRNAi to the 40S ribosome. The eIF-3 complex specifically targets and initiates translation of a subset of mRNAs involved in cell proliferation. The polypeptide is Eukaryotic translation initiation factor 3 subunit C (nip1) (Aspergillus clavatus (strain ATCC 1007 / CBS 513.65 / DSM 816 / NCTC 3887 / NRRL 1 / QM 1276 / 107)).